We begin with the raw amino-acid sequence, 533 residues long: Chromosomal replication initiator protein DnaA (533 aa).

The segment at 1–72 (MNDFWQHCSA…DLARDFWNAP (72 aa)) is domain I, interacts with DnaA modulators. The domain II stretch occupies residues 72–196 (PIEVQFVLDP…EAADSMYERS (125 aa)). The tract at residues 83-120 (AGQRSPAGATPLAPRAPLPSANPAPVAPGPASAPAVDA) is disordered. A compositionally biased stretch (pro residues) spans 96 to 110 (PRAPLPSANPAPVAP). The segment covering 111–120 (GPASAPAVDA) has biased composition (low complexity). A domain III, AAA+ region region spans residues 197-413 (KLNPVLTFDN…GALRKILAYS (217 aa)). The ATP site is built by Gly241, Gly243, Lys244, and Thr245. Positions 414 to 533 (KFHGREITIE…LHVLEQTLKG (120 aa)) are domain IV, binds dsDNA.

Belongs to the DnaA family. As to quaternary structure, oligomerizes as a right-handed, spiral filament on DNA at oriC.

It is found in the cytoplasm. Its function is as follows. Plays an essential role in the initiation and regulation of chromosomal replication. ATP-DnaA binds to the origin of replication (oriC) to initiate formation of the DNA replication initiation complex once per cell cycle. Binds the DnaA box (a 9 base pair repeat at the origin) and separates the double-stranded (ds)DNA. Forms a right-handed helical filament on oriC DNA; dsDNA binds to the exterior of the filament while single-stranded (ss)DNA is stabiized in the filament's interior. The ATP-DnaA-oriC complex binds and stabilizes one strand of the AT-rich DNA unwinding element (DUE), permitting loading of DNA polymerase. After initiation quickly degrades to an ADP-DnaA complex that is not apt for DNA replication. Binds acidic phospholipids. The sequence is that of Chromosomal replication initiator protein DnaA from Burkholderia pseudomallei (strain 1710b).